A 100-amino-acid chain; its full sequence is uncharacterized protein (100 aa).

It is found in the cytoplasm. It localises to the endoplasmic reticulum. This is an uncharacterized protein from Schizosaccharomyces pombe (strain 972 / ATCC 24843) (Fission yeast).